Consider the following 277-residue polypeptide: Large ribosomal subunit protein uL2 (277 aa).

2 disordered regions span residues 35–58 (QPLP…GGGH) and 213–277 (WKGI…RKRK).

Belongs to the universal ribosomal protein uL2 family. In terms of assembly, part of the 50S ribosomal subunit. Forms a bridge to the 30S subunit in the 70S ribosome.

Functionally, one of the primary rRNA binding proteins. Required for association of the 30S and 50S subunits to form the 70S ribosome, for tRNA binding and peptide bond formation. It has been suggested to have peptidyltransferase activity; this is somewhat controversial. Makes several contacts with the 16S rRNA in the 70S ribosome. This Staphylococcus carnosus (strain TM300) protein is Large ribosomal subunit protein uL2.